The sequence spans 213 residues: ATP phosphoribosyltransferase (213 aa).

It belongs to the ATP phosphoribosyltransferase family. Short subfamily. In terms of assembly, heteromultimer composed of HisG and HisZ subunits.

The protein localises to the cytoplasm. It catalyses the reaction 1-(5-phospho-beta-D-ribosyl)-ATP + diphosphate = 5-phospho-alpha-D-ribose 1-diphosphate + ATP. Its pathway is amino-acid biosynthesis; L-histidine biosynthesis; L-histidine from 5-phospho-alpha-D-ribose 1-diphosphate: step 1/9. Functionally, catalyzes the condensation of ATP and 5-phosphoribose 1-diphosphate to form N'-(5'-phosphoribosyl)-ATP (PR-ATP). Has a crucial role in the pathway because the rate of histidine biosynthesis seems to be controlled primarily by regulation of HisG enzymatic activity. This Thermoanaerobacter pseudethanolicus (strain ATCC 33223 / 39E) (Clostridium thermohydrosulfuricum) protein is ATP phosphoribosyltransferase.